We begin with the raw amino-acid sequence, 100 residues long: NADH-quinone oxidoreductase subunit K (100 aa).

3 helical membrane-spanning segments follow: residues 4–24 (MQHGLILAAILFTLGLTGLLI), 28–48 (LIFMLISLEVMINSAALAWVV), and 60–80 (IFYLLAITLAAAEASIGLALL).

This sequence belongs to the complex I subunit 4L family. NDH-1 is composed of 13 different subunits. Subunits NuoA, H, J, K, L, M, N constitute the membrane sector of the complex.

It is found in the cell membrane. The enzyme catalyses a quinone + NADH + 5 H(+)(in) = a quinol + NAD(+) + 4 H(+)(out). NDH-1 shuttles electrons from NADH, via FMN and iron-sulfur (Fe-S) centers, to quinones in the respiratory chain. The immediate electron acceptor for the enzyme in this species is believed to be ubiquinone. Couples the redox reaction to proton translocation (for every two electrons transferred, four hydrogen ions are translocated across the cytoplasmic membrane), and thus conserves the redox energy in a proton gradient. This is NADH-quinone oxidoreductase subunit K from Hamiltonella defensa subsp. Acyrthosiphon pisum (strain 5AT).